Consider the following 1295-residue polypeptide: Unconventional myosin-VI (1295 aa).

One can recognise a Myosin N-terminal SH3-like domain in the interval 2 to 53; that stretch reads EDGRPVWAPHPTEGFQMGNIVDIGPDSLTIEPLGQKGKTFLALINQVFPAEE. In terms of domain architecture, Myosin motor spans 57-771; the sequence is KDVEDNCSLM…KFAEFDQIMK (715 aa). Residue 151–158 participates in ATP binding; sequence GESGAGKT. S267 bears the Phosphoserine mark. The interval 273 to 317 is responsible for slow ATPase activity; it reads YLNRGCTRYFANKETDKQILQNRKTPEHLKAGSLKDPLLDDHGDF. The residue at position 405 (T405) is a Phosphothreonine. The residue at position 604 (S604) is a Phosphoserine. Residues 651 to 673 form an actin-binding region; it reads LNLLLDKLRSTGASFIRCIKPNL. A required for binding calmodulin region spans residues 782 to 810; it reads KRVNHWLICSRWKKVQWCSLSVIKLKNKI. In terms of domain architecture, IQ spans 813–842; it reads RAEACIKMQKTIRMWLCKRRHKPRIDGLVK. The segment at 835 to 916 is three-helix bundle; the sequence is PRIDGLVKVG…EVLLSALQKK (82 aa). The SAH stretch occupies residues 917–984; the sequence is KQQEEEAERL…EDDEKRIQAE (68 aa). The disordered stretch occupies residues 934-955; that stretch reads EKERKRREEDEQRRRKEEEERR. An interaction with TAX1BP1 and CALCOCO2/NDP52 region spans residues 1061 to 1286; the sequence is KEMSEILSRG…ESRQARPTYA (226 aa). The tract at residues 1117–1119 is interaction with OPTN; the sequence is RRL. Phosphoserine is present on S1156. The interval 1158-1286 is interaction with TOM1; sequence QQNPAAQLPA…ESRQARPTYA (129 aa).

This sequence belongs to the TRAFAC class myosin-kinesin ATPase superfamily. Myosin family. In terms of assembly, homodimer; dimerization seems to implicate the unfolding of the three-helix bundle region creating an additional calmodulin binding site, and cargo binding. Able to function as a monomer under specific conditions in vitro. Forms a complex with CFTR and DAB2 in the apical membrane of epithelial cells. Component of the DISP/DOCK7-induced septin displacement complex, at least composed of DOCK7, LRCH3 and MYO6. Binding to calmodulin through a unique insert, not found in other myosins, located in the neck region between the motor domain and the IQ domain appears to contribute to the directionality reversal. This interaction occurs only if the C-terminal lobe of calmodulin is occupied by calcium. Interaction with F-actin/ACTN1 occurs only at the apical brush border domain of the proximal tubule cells. Interacts with DAB2. In vitro, the C-terminal globular tail binds a C-terminal region of DAB2. Interacts with CFTR. Interacts with CABP5. Interacts (via residues 1158-1286) with TOM1 (via residues 392-463). Interacts (via residues 1060-1285) with OPTN. Interacts (via residues 1060-1285) with TAX1BP1 and CALCOCO2/NDP52. Interacts with TOM1L2. Interacts with CLIC5; may work together in a complex which also includes RDX and MYO6 to stabilize linkages between the plasma membrane and subjacent actin cytoskeleton at the base of stereocilia. Post-translationally, phosphorylation in the motor domain, induced by EGF, results in translocation of MYO6 from the cell surface to membrane ruffles and affects F-actin dynamics. Phosphorylated in vitro by p21-activated kinase (PAK). In terms of tissue distribution, expressed in the retina (at protein level).

Its subcellular location is the golgi apparatus. It is found in the trans-Golgi network membrane. It localises to the nucleus. The protein localises to the cytoplasm. The protein resides in the perinuclear region. Its subcellular location is the membrane. It is found in the clathrin-coated pit. It localises to the cytoplasmic vesicle. The protein localises to the clathrin-coated vesicle. The protein resides in the cell projection. Its subcellular location is the filopodium. It is found in the ruffle membrane. It localises to the microvillus. The protein localises to the cytosol. Its function is as follows. Myosins are actin-based motor molecules with ATPase activity. Unconventional myosins serve in intracellular movements. Myosin 6 is a reverse-direction motor protein that moves towards the minus-end of actin filaments. Has slow rate of actin-activated ADP release due to weak ATP binding. Functions in a variety of intracellular processes such as vesicular membrane trafficking and cell migration. Required for the structural integrity of the Golgi apparatus via the p53-dependent pro-survival pathway. Appears to be involved in a very early step of clathrin-mediated endocytosis in polarized epithelial cells. Together with TOM1, mediates delivery of endocytic cargo to autophagosomes thereby promoting autophagosome maturation and driving fusion with lysosomes. Links TOM1 with autophagy receptors, such as TAX1BP1; CALCOCO2/NDP52 and OPTN. May act as a regulator of F-actin dynamics. As part of the DISP complex, may regulate the association of septins with actin and thereby regulate the actin cytoskeleton. May play a role in transporting DAB2 from the plasma membrane to specific cellular targets. May play a role in the extension and network organization of neurites. Required for structural integrity of inner ear hair cells. Required for the correct localization of CLIC5 and RDX at the stereocilium base. Modulates RNA polymerase II-dependent transcription. The chain is Unconventional myosin-VI from Bos taurus (Bovine).